Reading from the N-terminus, the 270-residue chain is Tryptophan synthase alpha chain (270 aa).

Active-site proton acceptor residues include E49 and D60.

The protein belongs to the TrpA family. Tetramer of two alpha and two beta chains.

It catalyses the reaction (1S,2R)-1-C-(indol-3-yl)glycerol 3-phosphate + L-serine = D-glyceraldehyde 3-phosphate + L-tryptophan + H2O. It participates in amino-acid biosynthesis; L-tryptophan biosynthesis; L-tryptophan from chorismate: step 5/5. Its function is as follows. The alpha subunit is responsible for the aldol cleavage of indoleglycerol phosphate to indole and glyceraldehyde 3-phosphate. This is Tryptophan synthase alpha chain from Buchnera aphidicola subsp. Melaphis rhois.